We begin with the raw amino-acid sequence, 158 residues long: Scytalone dehydratase-like protein CPUR_05428 (158 aa).

Y24 and Y44 together coordinate substrate. Residues H79 and H104 contribute to the active site.

Belongs to the scytalone dehydratase family.

It participates in pigment biosynthesis. Functionally, scytalone dehydratase-like protein; part of the ergochrome gene cluster responsible for the typical purple-black color of the ergot sclerotia. The ergochrome gene cluster produces several ergot pigments including the yellow ergochrome secalonic acid and its derivatives, as well as the red anthraquinones endocrocin and clavorubin. The pathway begins with the synthesis of atrochrysone thioester by the polyketide synthase (PKS) CPUR_05437. The atrochrysone carboxyl ACP thioesterase CPUR_05436 then breaks the thioester bond and releases the atrochrysone carboxylic acid from CPUR_05437. The atrochrysone carboxylic acid is then converted to atrochrysone which is further transformed into emodin anthrone. The next step is performed by the anthrone oxygenase CPUR_05434 that catalyzes the oxidation of emodinanthrone to emodin. Emodin is further modified to yield monodictyphenone via several steps involving CPUR_05427, CPUR_05428, CPUR_05429 and CPUR_05430. The short chain dehydrogenase/reductase CPUR_05418 then catalyzes the C-5 ketoreduction to give the xanthone skeleton of the monomeric units. Ergochromes formation requires further dimerization steps of different xanthone units, probably catalyzed by the cytochrome P450 monooxygenase CPUR_05419. CPUR_05425, CPUR_05426 and CPUR_05431 are unique to Claviceps, thus it is likely that they are involved in further modification of xanthone units or in their dimerization. The yellow ergochromes and the red anthraquinone pigments endocrocin and clavorubin are products from the same PKS derived precursors and the latter are likely shunt products in the pathway of xanthone biosynthesis. It is proposed that atrochrysone carboxylic acid released from the PKS CPUR_05437 can also be converted to endocrocin anthrone which is further oxidized into endocrocin by CPUR_05435. Endocrocin could be then modified to clavorubin, possibly by CPUR_05423 and CPUR_05431. Clavorubin is the principal anthraquinone metabolite produced by the cluster with a much higher yield compared to endocrocin. The chain is Scytalone dehydratase-like protein CPUR_05428 from Claviceps purpurea (strain 20.1) (Ergot fungus).